The primary structure comprises 156 residues: 6,7-dimethyl-8-ribityllumazine synthase (156 aa).

Residues Phe22, 57–59, and 81–83 each bind 5-amino-6-(D-ribitylamino)uracil; these read AYE and SVI. 86–87 provides a ligand contact to (2S)-2-hydroxy-3-oxobutyl phosphate; it reads GT. His89 acts as the Proton donor in catalysis. Residue Phe114 coordinates 5-amino-6-(D-ribitylamino)uracil. Position 128 (Arg128) interacts with (2S)-2-hydroxy-3-oxobutyl phosphate.

It belongs to the DMRL synthase family. In terms of assembly, forms an icosahedral capsid composed of 60 subunits, arranged as a dodecamer of pentamers.

It catalyses the reaction (2S)-2-hydroxy-3-oxobutyl phosphate + 5-amino-6-(D-ribitylamino)uracil = 6,7-dimethyl-8-(1-D-ribityl)lumazine + phosphate + 2 H2O + H(+). It participates in cofactor biosynthesis; riboflavin biosynthesis; riboflavin from 2-hydroxy-3-oxobutyl phosphate and 5-amino-6-(D-ribitylamino)uracil: step 1/2. Catalyzes the formation of 6,7-dimethyl-8-ribityllumazine by condensation of 5-amino-6-(D-ribitylamino)uracil with 3,4-dihydroxy-2-butanone 4-phosphate. This is the penultimate step in the biosynthesis of riboflavin. The sequence is that of 6,7-dimethyl-8-ribityllumazine synthase from Photobacterium profundum (strain SS9).